A 256-amino-acid chain; its full sequence is Ubiquinone/menaquinone biosynthesis C-methyltransferase UbiE (256 aa).

S-adenosyl-L-methionine-binding positions include Thr79, Asp100, and 128-129 (DA).

This sequence belongs to the class I-like SAM-binding methyltransferase superfamily. MenG/UbiE family.

The catalysed reaction is a 2-demethylmenaquinol + S-adenosyl-L-methionine = a menaquinol + S-adenosyl-L-homocysteine + H(+). It catalyses the reaction a 2-methoxy-6-(all-trans-polyprenyl)benzene-1,4-diol + S-adenosyl-L-methionine = a 5-methoxy-2-methyl-3-(all-trans-polyprenyl)benzene-1,4-diol + S-adenosyl-L-homocysteine + H(+). It participates in quinol/quinone metabolism; menaquinone biosynthesis; menaquinol from 1,4-dihydroxy-2-naphthoate: step 2/2. Its pathway is cofactor biosynthesis; ubiquinone biosynthesis. Methyltransferase required for the conversion of demethylmenaquinol (DMKH2) to menaquinol (MKH2) and the conversion of 2-polyprenyl-6-methoxy-1,4-benzoquinol (DDMQH2) to 2-polyprenyl-3-methyl-6-methoxy-1,4-benzoquinol (DMQH2). This Pseudomonas aeruginosa (strain LESB58) protein is Ubiquinone/menaquinone biosynthesis C-methyltransferase UbiE.